Reading from the N-terminus, the 436-residue chain is tRNA pseudouridine synthase Pus10 (436 aa).

Aspartate 254 serves as the catalytic Nucleophile. Substrate contacts are provided by tyrosine 322 and tyrosine 394.

It belongs to the pseudouridine synthase Pus10 family.

It carries out the reaction uridine(54) in tRNA = pseudouridine(54) in tRNA. The enzyme catalyses uridine(55) in tRNA = pseudouridine(55) in tRNA. Functionally, responsible for synthesis of pseudouridine from uracil-54 and uracil-55 in the psi GC loop of transfer RNAs. The sequence is that of tRNA pseudouridine synthase Pus10 from Methanopyrus kandleri (strain AV19 / DSM 6324 / JCM 9639 / NBRC 100938).